We begin with the raw amino-acid sequence, 449 residues long: Probable glycine dehydrogenase (decarboxylating) subunit 1 (449 aa).

Belongs to the GcvP family. N-terminal subunit subfamily. In terms of assembly, the glycine cleavage system is composed of four proteins: P, T, L and H. In this organism, the P 'protein' is a heterodimer of two subunits.

It carries out the reaction N(6)-[(R)-lipoyl]-L-lysyl-[glycine-cleavage complex H protein] + glycine + H(+) = N(6)-[(R)-S(8)-aminomethyldihydrolipoyl]-L-lysyl-[glycine-cleavage complex H protein] + CO2. In terms of biological role, the glycine cleavage system catalyzes the degradation of glycine. The P protein binds the alpha-amino group of glycine through its pyridoxal phosphate cofactor; CO(2) is released and the remaining methylamine moiety is then transferred to the lipoamide cofactor of the H protein. The polypeptide is Probable glycine dehydrogenase (decarboxylating) subunit 1 (Rhodospirillum centenum (strain ATCC 51521 / SW)).